A 79-amino-acid chain; its full sequence is Conotoxin Vi6.1 (79 aa).

The first 22 residues, Met-1 to Ala-22, serve as a signal peptide directing secretion. A propeptide spanning residues Asp-23–Arg-47 is cleaved from the precursor. 3 cysteine pairs are disulfide-bonded: Cys-49/Cys-62, Cys-56/Cys-67, and Cys-61/Cys-77. 2 positions are modified to 4-hydroxyproline: Pro-60 and Pro-63.

In terms of tissue distribution, expressed by the venom duct.

Its subcellular location is the secreted. Ion channel inhibitor that inhibits the increase in intracellular calcium upon depolarization in DRG neurons. In vivo, both intraperitoneal and intracranial injections into mice induce hyperactivity. In Conus virgo (Virgin cone), this protein is Conotoxin Vi6.1.